A 358-amino-acid polypeptide reads, in one-letter code: Plancitoxin-1 (358 aa).

The first 26 residues, 1-26 (MPSSVIMFTFLALTVLTAVMVGTSEA), serve as a signal peptide directing secretion. N-linked (GlcNAc...) asparagine glycosylation is present at Asn-274. His-303 is an active-site residue.

This sequence belongs to the DNase II family. As to quaternary structure, plancitoxin is a heterodimer of alpha and beta subunits; disulfide-linked by a single disulfide bond. In terms of tissue distribution, venom gland.

Its subcellular location is the secreted. The catalysed reaction is Endonucleolytic cleavage to nucleoside 3'-phosphates and 3'-phosphooligonucleotide end-products.. Hydrolyzes DNA with an optimum pH of 7.2. Is potently hepatotoxic. It induces caspase-independent apoptosis (on rat liver cells) through the following procedure: binding to a specific receptor in the cytoplasmic membrane, entering the cell, entering the nucleus and degrading DNA. The sequence is that of Plancitoxin-1 from Acanthaster planci (Crown-of-thorns starfish).